The primary structure comprises 69 residues: Calcium-binding protein (69 aa).

EF-hand domains follow at residues 2–37 (VNRTEAAQLLKHLDRDKSGKISSQELMEFLHTVNCP) and 38–69 (FKKEQVEKFIKQHDKDGDGQLNTDELLDVLCS). 10 residues coordinate Ca(2+): D15, D17, S19, K21, E26, D51, D53, D55, Q57, and E62.

In Schistosoma mansoni (Blood fluke), this protein is Calcium-binding protein.